Here is a 204-residue protein sequence, read N- to C-terminus: Transcription initiation factor TFIID subunit 11b (204 aa).

The tract at residues 38 to 60 (PFEAAMEEQEESPVETEQTLEGD) is disordered. The segment covering 42-58 (AMEEQEESPVETEQTLE) has biased composition (acidic residues). One can recognise a Histone-fold domain in the interval 106–195 (FTEEQMSRYE…RRLKLQGKVP (90 aa)).

The protein belongs to the TAF11 family. Component of the TFIID complex. TFIID is composed of TATA binding protein (TBP) and a number of TBP-associated factors (TAFs) whose MWs range from 14-217 kDa. In terms of tissue distribution, expressed in roots, leaves and inflorescences.

It is found in the nucleus. Functionally, TAFs are components of the transcription factor IID (TFIID) complex that is essential for mediating regulation of RNA polymerase transcription. This chain is Transcription initiation factor TFIID subunit 11b (TAF11B), found in Arabidopsis thaliana (Mouse-ear cress).